The sequence spans 522 residues: Lysine--tRNA ligase (522 aa).

Positions 44–52 (PSGLPHIGT) match the 'HIGH' region motif. The 'KMSKS' region motif lies at 290–294 (KISKS). Lysine 293 lines the ATP pocket.

It belongs to the class-I aminoacyl-tRNA synthetase family.

Its subcellular location is the cytoplasm. The enzyme catalyses tRNA(Lys) + L-lysine + ATP = L-lysyl-tRNA(Lys) + AMP + diphosphate. In Rickettsia rickettsii (strain Iowa), this protein is Lysine--tRNA ligase.